A 523-amino-acid polypeptide reads, in one-letter code: 2-isopropylmalate synthase (523 aa).

Residues 5–267 (VIIFDTTLRD…ETGINAKEIH (263 aa)) enclose the Pyruvate carboxyltransferase domain. The Mn(2+) site is built by aspartate 14, histidine 202, histidine 204, and asparagine 238. The regulatory domain stretch occupies residues 392-523 (ELQQLVVHSD…QQNKQEFGSV (132 aa)).

The protein belongs to the alpha-IPM synthase/homocitrate synthase family. LeuA type 1 subfamily. In terms of assembly, homodimer. Requires Mn(2+) as cofactor.

It localises to the cytoplasm. The enzyme catalyses 3-methyl-2-oxobutanoate + acetyl-CoA + H2O = (2S)-2-isopropylmalate + CoA + H(+). It participates in amino-acid biosynthesis; L-leucine biosynthesis; L-leucine from 3-methyl-2-oxobutanoate: step 1/4. Its function is as follows. Catalyzes the condensation of the acetyl group of acetyl-CoA with 3-methyl-2-oxobutanoate (2-ketoisovalerate) to form 3-carboxy-3-hydroxy-4-methylpentanoate (2-isopropylmalate). The chain is 2-isopropylmalate synthase from Shewanella halifaxensis (strain HAW-EB4).